The chain runs to 303 residues: Enoyl-CoA hydratase domain-containing protein 3, mitochondrial (303 aa).

The N-terminal 17 residues, 1–17, are a transit peptide targeting the mitochondrion; the sequence is MAAVAVLRAFGASGPMC. Lysine 110 bears the N6-succinyllysine mark.

This sequence belongs to the enoyl-CoA hydratase/isomerase family. In terms of tissue distribution, expressed in adipocytes. Expressed in blood cells, with higher expression in patients with low coronary lesions.

Its subcellular location is the mitochondrion. May play a role in fatty acid biosynthesis and insulin sensitivity. This Homo sapiens (Human) protein is Enoyl-CoA hydratase domain-containing protein 3, mitochondrial.